The primary structure comprises 404 residues: 8-amino-7-oxononanoate synthase (404 aa).

R20 lines the substrate pocket. 116-117 contacts pyridoxal 5'-phosphate; sequence GY. Residue H141 coordinates substrate. Residues S187, H215, and T243 each contribute to the pyridoxal 5'-phosphate site. Position 246 is an N6-(pyridoxal phosphate)lysine (K246). T366 provides a ligand contact to substrate.

The protein belongs to the class-II pyridoxal-phosphate-dependent aminotransferase family. BioF subfamily. Homodimer. It depends on pyridoxal 5'-phosphate as a cofactor.

The enzyme catalyses 6-carboxyhexanoyl-[ACP] + L-alanine + H(+) = (8S)-8-amino-7-oxononanoate + holo-[ACP] + CO2. Its pathway is cofactor biosynthesis; biotin biosynthesis. Functionally, catalyzes the decarboxylative condensation of pimeloyl-[acyl-carrier protein] and L-alanine to produce 8-amino-7-oxononanoate (AON), [acyl-carrier protein], and carbon dioxide. The protein is 8-amino-7-oxononanoate synthase of Cupriavidus taiwanensis (strain DSM 17343 / BCRC 17206 / CCUG 44338 / CIP 107171 / LMG 19424 / R1) (Ralstonia taiwanensis (strain LMG 19424)).